A 436-amino-acid polypeptide reads, in one-letter code: tRNA (guanine(37)-N(1))-methyltransferase 1 (436 aa).

S-adenosyl-L-methionine contacts are provided by residues H229, 277 to 278 (DL), and N325.

This sequence belongs to the class I-like SAM-binding methyltransferase superfamily. TRM5/TYW2 family. In terms of assembly, monomer.

The protein localises to the mitochondrion matrix. Its subcellular location is the nucleus. It is found in the cytoplasm. The catalysed reaction is guanosine(37) in tRNA + S-adenosyl-L-methionine = N(1)-methylguanosine(37) in tRNA + S-adenosyl-L-homocysteine + H(+). Specifically methylates the N1 position of guanosine-37 in various cytoplasmic and mitochondrial tRNAs. Methylation is not dependent on the nature of the nucleoside 5' of the target nucleoside. This is the first step in the biosynthesis of wybutosine (yW), a modified base adjacent to the anticodon of tRNAs and required for accurate decoding. In Phaeodactylum tricornutum (strain CCAP 1055/1), this protein is tRNA (guanine(37)-N(1))-methyltransferase 1.